Reading from the N-terminus, the 404-residue chain is Tryptophan synthase beta chain (404 aa).

The residue at position 90 (lysine 90) is an N6-(pyridoxal phosphate)lysine.

Belongs to the TrpB family. Tetramer of two alpha and two beta chains. Requires pyridoxal 5'-phosphate as cofactor.

The catalysed reaction is (1S,2R)-1-C-(indol-3-yl)glycerol 3-phosphate + L-serine = D-glyceraldehyde 3-phosphate + L-tryptophan + H2O. It participates in amino-acid biosynthesis; L-tryptophan biosynthesis; L-tryptophan from chorismate: step 5/5. Functionally, the beta subunit is responsible for the synthesis of L-tryptophan from indole and L-serine. The sequence is that of Tryptophan synthase beta chain from Geobacillus thermodenitrificans (strain NG80-2).